Consider the following 432-residue polypeptide: Enolase (432 aa).

Q167 contributes to the (2R)-2-phosphoglycerate binding site. The active-site Proton donor is E209. 3 residues coordinate Mg(2+): D246, E291, and D318. (2R)-2-phosphoglycerate is bound by residues K343, R372, S373, and K394. K343 functions as the Proton acceptor in the catalytic mechanism.

The protein belongs to the enolase family. Component of the RNA degradosome, a multiprotein complex involved in RNA processing and mRNA degradation. Mg(2+) is required as a cofactor.

Its subcellular location is the cytoplasm. It is found in the secreted. It localises to the cell surface. It carries out the reaction (2R)-2-phosphoglycerate = phosphoenolpyruvate + H2O. The protein operates within carbohydrate degradation; glycolysis; pyruvate from D-glyceraldehyde 3-phosphate: step 4/5. Catalyzes the reversible conversion of 2-phosphoglycerate (2-PG) into phosphoenolpyruvate (PEP). It is essential for the degradation of carbohydrates via glycolysis. The polypeptide is Enolase (Colwellia psychrerythraea (strain 34H / ATCC BAA-681) (Vibrio psychroerythus)).